A 61-amino-acid polypeptide reads, in one-letter code: Probable pancreatic secretory proteinase inhibitor (61 aa).

Residues 6 to 61 enclose the Kazal-like domain; it reads LYRKPSCGEMSAMHACPMNFAPVCGTDGNTYPNECSLCFQRQNTKTDILITKDDRC. 3 cysteine pairs are disulfide-bonded: cysteine 12-cysteine 43, cysteine 21-cysteine 40, and cysteine 29-cysteine 61.

It is found in the secreted. This Anguilla anguilla (European freshwater eel) protein is Probable pancreatic secretory proteinase inhibitor.